A 367-amino-acid chain; its full sequence is Testis-specific serine/threonine-protein kinase 1 (367 aa).

One can recognise a Protein kinase domain in the interval 12–272 (YLLGINLGEG…IDEILSHCWM (261 aa)). ATP-binding positions include 18 to 26 (LGEGSYAKV) and lysine 41. Aspartate 136 serves as the catalytic Proton acceptor. Phosphothreonine is present on threonine 174. Positions 276–367 (ARGSPSVAIN…PQQPPETRAQ (92 aa)) are disordered. Basic and acidic residues predominate over residues 303 to 314 (GSDKKSATKLEP).

It belongs to the protein kinase superfamily. CAMK Ser/Thr protein kinase family. In terms of assembly, interacts with TSSK2. Interacts with HSP90; this interaction stabilizes TSSK1. The cofactor is Mg(2+). Post-translationally, autophosphorylated. Ubiquitinated; HSP90 activity negatively regulates ubiquitination and degradation. As to expression, testis-specific. Present in sperm (at protein level).

It is found in the cytoplasm. The protein resides in the cytoplasmic vesicle. It localises to the secretory vesicle. The protein localises to the acrosome. Its subcellular location is the cell projection. It is found in the cilium. The protein resides in the flagellum. The catalysed reaction is L-seryl-[protein] + ATP = O-phospho-L-seryl-[protein] + ADP + H(+). It catalyses the reaction L-threonyl-[protein] + ATP = O-phospho-L-threonyl-[protein] + ADP + H(+). With respect to regulation, kinase activity is specifically inhibited by 2 classes of compounds: biphenyl compounds (1,1'-(biphenyl-4,4'-diyl)bis(2,2-dihydroxyethanone)) and 1,2,7-trialky-1H-imidazo[4,5-g]quinoxalin-6-one. Activated by phosphorylation on Thr-174 and potentially by autophosphorylation. Its function is as follows. Testis-specific serine/threonine-protein kinase required during spermatid development. Phosphorylates 'Ser-288' of TSKS. Involved in the late stages of spermatogenesis, during the reconstruction of the cytoplasm. During spermatogenesis, required for the transformation of a ring-shaped structure around the base of the flagellum originating from the chromatoid body. This chain is Testis-specific serine/threonine-protein kinase 1 (TSSK1B), found in Homo sapiens (Human).